Consider the following 76-residue polypeptide: ATP synthase subunit c (76 aa).

2 helical membrane passes run 5–25 and 54–74; these read GIIA…GIGI and AALA…LVFL.

This sequence belongs to the ATPase C chain family. In terms of assembly, F-type ATPases have 2 components, F(1) - the catalytic core - and F(0) - the membrane proton channel. F(1) has five subunits: alpha(3), beta(3), gamma(1), delta(1), epsilon(1). F(0) has three main subunits: a(1), b(2) and c(10-14). The alpha and beta chains form an alternating ring which encloses part of the gamma chain. F(1) is attached to F(0) by a central stalk formed by the gamma and epsilon chains, while a peripheral stalk is formed by the delta and b chains.

Its subcellular location is the cell membrane. Functionally, f(1)F(0) ATP synthase produces ATP from ADP in the presence of a proton or sodium gradient. F-type ATPases consist of two structural domains, F(1) containing the extramembraneous catalytic core and F(0) containing the membrane proton channel, linked together by a central stalk and a peripheral stalk. During catalysis, ATP synthesis in the catalytic domain of F(1) is coupled via a rotary mechanism of the central stalk subunits to proton translocation. Its function is as follows. Key component of the F(0) channel; it plays a direct role in translocation across the membrane. A homomeric c-ring of between 10-14 subunits forms the central stalk rotor element with the F(1) delta and epsilon subunits. In Ruminiclostridium cellulolyticum (strain ATCC 35319 / DSM 5812 / JCM 6584 / H10) (Clostridium cellulolyticum), this protein is ATP synthase subunit c.